The chain runs to 493 residues: Keratin, type II cuticular Hb3 (493 aa).

The segment at 1 to 111 (MTCGFSTVGS…PNAQCVKQEE (111 aa)) is head. The IF rod domain maps to 111–422 (EKEQIKCLNN…RLLEGEEQRL (312 aa)). The segment at 112 to 146 (KEQIKCLNNRFAAFIDKVRFLEQQNKLLETKLQFY) is coil 1A. Residues 147–156 (QNRQCCESNL) are linker 1. Residues 157–257 (EPLFEGYIET…YEEEIRVLQA (101 aa)) form a coil 1B region. Residue K217 forms a Glycyl lysine isopeptide (Lys-Gly) (interchain with G-Cter in SUMO1) linkage. A linker 12 region spans residues 258-274 (NISDTSVIVKMDNSRGL). A coil 2 region spans residues 275 to 418 (NMDNIVAEIK…ATYRRLLEGE (144 aa)). The segment at 419-493 (EQRLCEGVGA…GGGSCSLGRC (75 aa)) is tail.

This sequence belongs to the intermediate filament family. As to quaternary structure, heterotetramer of two type I and two type II keratins.

In Bos taurus (Bovine), this protein is Keratin, type II cuticular Hb3.